The sequence spans 65 residues: U15-hexatoxin-Mg1b (65 aa).

Contains 4 disulfide bonds. Expressed by the venom gland.

It localises to the secreted. Its function is as follows. In vivo, intrathorax injection into crickets causes death. The sequence is that of U15-hexatoxin-Mg1b from Macrothele gigas (Japanese funnel web spider).